We begin with the raw amino-acid sequence, 147 residues long: Hemoglobin subunit beta (147 aa).

At Val2 the chain carries N-acetylvaline. The region spanning 3–147 (HLTPEEKSAV…VANALAHKYH (145 aa)) is the Globin domain. Thr13 carries the post-translational modification Phosphothreonine. Phosphoserine is present on Ser45. Lys60 carries the N6-acetyllysine modification. Residue His64 participates in heme b binding. Lys83 carries the N6-acetyllysine modification. Position 93 (His93) interacts with heme b. S-nitrosocysteine is present on Cys94. An N6-acetyllysine modification is found at Lys145.

Belongs to the globin family. In terms of assembly, heterotetramer of two alpha chains and two beta chains. In terms of tissue distribution, red blood cells.

Functionally, involved in oxygen transport from the lung to the various peripheral tissues. The polypeptide is Hemoglobin subunit beta (HBB) (Gorilla gorilla gorilla (Western lowland gorilla)).